A 432-amino-acid polypeptide reads, in one-letter code: Amino-acid acetyltransferase (432 aa).

The region spanning 286 to 425 is the N-acetyltransferase domain; that stretch reads EQLREAGIED…ASLYNFQRNS (140 aa).

Belongs to the acetyltransferase family. ArgA subfamily.

The protein resides in the cytoplasm. The enzyme catalyses L-glutamate + acetyl-CoA = N-acetyl-L-glutamate + CoA + H(+). Its pathway is amino-acid biosynthesis; L-arginine biosynthesis; N(2)-acetyl-L-ornithine from L-glutamate: step 1/4. The sequence is that of Amino-acid acetyltransferase from Pseudomonas paraeruginosa (strain DSM 24068 / PA7) (Pseudomonas aeruginosa (strain PA7)).